Here is a 292-residue protein sequence, read N- to C-terminus: MAKKIKQIAIYGKGGIGKSTTTSNISAALSVAGYKVMQFGCDPKSDSTNTLRGGEYIPTVLDTLRDKQIVRAHDVIFEGFNGIYCVEAGGPAPGVGCAGRGIITSVSLLKQQKVFEELDLDYVIYDVLGDVVCGGFAVPVREGIAEHVFTVTSADFMALYAANNLFKGIHKYSTEGGALLGGVIANSINAPYAKEIVDDFVARTHTQVMEYVPRSVSVTQAELQGKTTIEADPNSKQAQIYKSLAQKIVDHTESKVPVPLETSELREWASNWGKQLVELEAGVLSPAAAGNL.

ATP is bound at residue 12 to 19; that stretch reads GKGGIGKS. Cysteine 97 provides a ligand contact to [4Fe-4S] cluster. An ADP-ribosylarginine; by dinitrogenase reductase ADP-ribosyltransferase modification is found at arginine 100. Cysteine 133 contacts [4Fe-4S] cluster.

It belongs to the NifH/BchL/ChlL family. Homodimer. The cofactor is [4Fe-4S] cluster. Post-translationally, the reversible ADP-ribosylation of Arg-100 inactivates the nitrogenase reductase and regulates nitrogenase activity.

The enzyme catalyses N2 + 8 reduced [2Fe-2S]-[ferredoxin] + 16 ATP + 16 H2O = H2 + 8 oxidized [2Fe-2S]-[ferredoxin] + 2 NH4(+) + 16 ADP + 16 phosphate + 6 H(+). Its function is as follows. The key enzymatic reactions in nitrogen fixation are catalyzed by the nitrogenase complex, which has 2 components: the iron protein and the molybdenum-iron protein. This is Nitrogenase iron protein 2 (nifH2) from Paenibacillus durus (Paenibacillus azotofixans).